The sequence spans 326 residues: Phosphate acyltransferase (326 aa).

The protein belongs to the PlsX family. In terms of assembly, homodimer. Probably interacts with PlsY.

It localises to the cytoplasm. It catalyses the reaction a fatty acyl-[ACP] + phosphate = an acyl phosphate + holo-[ACP]. It participates in lipid metabolism; phospholipid metabolism. Functionally, catalyzes the reversible formation of acyl-phosphate (acyl-PO(4)) from acyl-[acyl-carrier-protein] (acyl-ACP). This enzyme utilizes acyl-ACP as fatty acyl donor, but not acyl-CoA. The polypeptide is Phosphate acyltransferase (Macrococcus caseolyticus (strain JCSC5402) (Macrococcoides caseolyticum)).